Consider the following 272-residue polypeptide: NH(3)-dependent NAD(+) synthetase (272 aa).

An ATP-binding site is contributed by 43-50 (GLSGGQDS). Aspartate 49 contributes to the Mg(2+) binding site. Arginine 138 contributes to the deamido-NAD(+) binding site. Threonine 158 contributes to the ATP binding site. Glutamate 163 contributes to the Mg(2+) binding site. Deamido-NAD(+) contacts are provided by lysine 171 and aspartate 178. 2 residues coordinate ATP: lysine 187 and threonine 209. 258–259 (HK) serves as a coordination point for deamido-NAD(+).

The protein belongs to the NAD synthetase family. As to quaternary structure, homodimer.

It catalyses the reaction deamido-NAD(+) + NH4(+) + ATP = AMP + diphosphate + NAD(+) + H(+). It participates in cofactor biosynthesis; NAD(+) biosynthesis; NAD(+) from deamido-NAD(+) (ammonia route): step 1/1. Its function is as follows. Catalyzes the ATP-dependent amidation of deamido-NAD to form NAD. Uses ammonia as a nitrogen source. This chain is NH(3)-dependent NAD(+) synthetase, found in Halalkalibacterium halodurans (strain ATCC BAA-125 / DSM 18197 / FERM 7344 / JCM 9153 / C-125) (Bacillus halodurans).